The chain runs to 402 residues: 3-isopropylmalate dehydratase large subunit 2 (402 aa).

3 residues coordinate [4Fe-4S] cluster: C280, C341, and C344.

It belongs to the aconitase/IPM isomerase family. LeuC type 2 subfamily. Heterodimer of LeuC and LeuD. Requires [4Fe-4S] cluster as cofactor.

It carries out the reaction (2R,3S)-3-isopropylmalate = (2S)-2-isopropylmalate. It functions in the pathway amino-acid biosynthesis; L-leucine biosynthesis; L-leucine from 3-methyl-2-oxobutanoate: step 2/4. In terms of biological role, catalyzes the isomerization between 2-isopropylmalate and 3-isopropylmalate, via the formation of 2-isopropylmaleate. The chain is 3-isopropylmalate dehydratase large subunit 2 from Methanopyrus kandleri (strain AV19 / DSM 6324 / JCM 9639 / NBRC 100938).